The primary structure comprises 241 residues: Aquaporin Z 1 (241 aa).

A helical membrane pass occupies residues Ala-23–Phe-43. The short motif at Asn-63–Ala-65 is the NPA 1 element. 3 consecutive transmembrane segments (helical) span residues Ile-85–Gly-105, Leu-129–Gly-149, and Pro-156–Ile-176. The NPA 2 motif lies at Asn-184–Ala-186. Residues Trp-204 to Phe-224 form a helical membrane-spanning segment.

This sequence belongs to the MIP/aquaporin (TC 1.A.8) family. Homotetramer.

The protein localises to the cell inner membrane. The catalysed reaction is H2O(in) = H2O(out). In terms of biological role, channel that permits osmotically driven movement of water in both directions. It is involved in the osmoregulation and in the maintenance of cell turgor during volume expansion in rapidly growing cells. It mediates rapid entry or exit of water in response to abrupt changes in osmolarity. In Agrobacterium fabrum (strain C58 / ATCC 33970) (Agrobacterium tumefaciens (strain C58)), this protein is Aquaporin Z 1.